We begin with the raw amino-acid sequence, 155 residues long: Large ribosomal subunit protein bL9c (155 aa).

Belongs to the bacterial ribosomal protein bL9 family.

Its subcellular location is the plastid. It localises to the chloroplast. Binds to the 23S rRNA. This is Large ribosomal subunit protein bL9c from Porphyra purpurea (Red seaweed).